The following is an 827-amino-acid chain: Protein SEY1 (827 aa).

Residues 1–26 form a disordered region; it reads MSQSSPSNAETDEDLSTTSSSSSFVP. Residues 1 to 719 are Cytoplasmic-facing; the sequence is MSQSSPSNAE…KRSIVQHVTQ (719 aa). A GB1/RHD3-type G domain is found at 63–291; the sequence is GNNYHIISVF…VKKDLFRPNY (229 aa). 73–80 lines the GTP pocket; sequence GSQSTGKS. 2 coiled-coil regions span residues 389 to 409 and 472 to 492; these read KSVY…KFRE and VSNL…VELK. A helical membrane pass occupies residues 720 to 740; that stretch reads IPYYIYLVIMVLGWNEFMAIV. The Lumenal segment spans residues 741-743; sequence RNP. A helical membrane pass occupies residues 744–764; sequence LFFSLVLVFGAGLYILYSMNL. At 765 to 827 the chain is on the cytoplasmic side; that stretch reads LKPAMVVVQR…VVETIEMQDL (63 aa). The stretch at 803–823 forms a coiled coil; the sequence is QKISASNREKVEEEKVVETIE.

Belongs to the TRAFAC class dynamin-like GTPase superfamily. GB1/RHD3 GTPase family. RHD3 subfamily.

It localises to the endoplasmic reticulum membrane. Its function is as follows. Cooperates with the reticulon proteins and tubule-shaping DP1 family proteins to generate and maintain the structure of the tubular endoplasmic reticulum network. Has GTPase activity, which is required for its function in ER organization. This is Protein SEY1 from Scheffersomyces stipitis (strain ATCC 58785 / CBS 6054 / NBRC 10063 / NRRL Y-11545) (Yeast).